A 443-amino-acid chain; its full sequence is Phosphoglucosamine mutase (443 aa).

Ser-101 functions as the Phosphoserine intermediate in the catalytic mechanism. Residues Ser-101, Asp-239, Asp-241, and Asp-243 each contribute to the Mg(2+) site. Phosphoserine is present on Ser-101.

It belongs to the phosphohexose mutase family. Mg(2+) serves as cofactor. Activated by phosphorylation.

The enzyme catalyses alpha-D-glucosamine 1-phosphate = D-glucosamine 6-phosphate. Its function is as follows. Catalyzes the conversion of glucosamine-6-phosphate to glucosamine-1-phosphate. The sequence is that of Phosphoglucosamine mutase from Francisella tularensis subsp. tularensis (strain FSC 198).